Here is a 119-residue protein sequence, read N- to C-terminus: Large ribosomal subunit protein bL20 (119 aa).

This sequence belongs to the bacterial ribosomal protein bL20 family.

Its function is as follows. Binds directly to 23S ribosomal RNA and is necessary for the in vitro assembly process of the 50S ribosomal subunit. It is not involved in the protein synthesizing functions of that subunit. In Rhodopseudomonas palustris (strain BisA53), this protein is Large ribosomal subunit protein bL20.